A 114-amino-acid chain; its full sequence is UPF0145 protein Acry_1752 (114 aa).

It belongs to the UPF0145 family.

This chain is UPF0145 protein Acry_1752, found in Acidiphilium cryptum (strain JF-5).